The following is a 152-amino-acid chain: Superoxide dismutase [Cu-Zn] 4A (152 aa).

Cu cation-binding residues include His-45, His-47, and His-62. Cys-56 and Cys-145 are disulfide-bonded. 4 residues coordinate Zn(2+): His-62, His-70, His-79, and Asp-82. Cu cation is bound at residue His-119.

This sequence belongs to the Cu-Zn superoxide dismutase family. In terms of assembly, homodimer. The cofactor is Cu cation. Zn(2+) is required as a cofactor.

It localises to the cytoplasm. It catalyses the reaction 2 superoxide + 2 H(+) = H2O2 + O2. Functionally, destroys radicals which are normally produced within the cells and which are toxic to biological systems. This Zea mays (Maize) protein is Superoxide dismutase [Cu-Zn] 4A (SODCC.3).